Here is a 134-residue protein sequence, read N- to C-terminus: Phosphoribosyl-AMP cyclohydrolase (134 aa).

Asp-80 serves as a coordination point for Mg(2+). A Zn(2+)-binding site is contributed by Cys-81. Residues Asp-82 and Asp-84 each coordinate Mg(2+). Positions 98 and 105 each coordinate Zn(2+).

The protein belongs to the PRA-CH family. As to quaternary structure, homodimer. The cofactor is Mg(2+). Zn(2+) serves as cofactor.

Its subcellular location is the cytoplasm. The enzyme catalyses 1-(5-phospho-beta-D-ribosyl)-5'-AMP + H2O = 1-(5-phospho-beta-D-ribosyl)-5-[(5-phospho-beta-D-ribosylamino)methylideneamino]imidazole-4-carboxamide. It functions in the pathway amino-acid biosynthesis; L-histidine biosynthesis; L-histidine from 5-phospho-alpha-D-ribose 1-diphosphate: step 3/9. Its function is as follows. Catalyzes the hydrolysis of the adenine ring of phosphoribosyl-AMP. This is Phosphoribosyl-AMP cyclohydrolase from Bordetella pertussis (strain Tohama I / ATCC BAA-589 / NCTC 13251).